We begin with the raw amino-acid sequence, 149 residues long: Deoxyuridine 5'-triphosphate nucleotidohydrolase (149 aa).

Residues 68-70 (RSG), Asn81, 85-87 (LID), and Met95 each bind substrate.

This sequence belongs to the dUTPase family. The cofactor is Mg(2+).

It carries out the reaction dUTP + H2O = dUMP + diphosphate + H(+). It participates in pyrimidine metabolism; dUMP biosynthesis; dUMP from dCTP (dUTP route): step 2/2. In terms of biological role, this enzyme is involved in nucleotide metabolism: it produces dUMP, the immediate precursor of thymidine nucleotides and it decreases the intracellular concentration of dUTP so that uracil cannot be incorporated into DNA. The chain is Deoxyuridine 5'-triphosphate nucleotidohydrolase from Polynucleobacter asymbioticus (strain DSM 18221 / CIP 109841 / QLW-P1DMWA-1) (Polynucleobacter necessarius subsp. asymbioticus).